We begin with the raw amino-acid sequence, 918 residues long: Glutamate receptor ionotropic, kainate 1 (918 aa).

The first 30 residues, 1–30 (MELGTLLAQPGLWTRDTSWALLYFLCYILP), serve as a signal peptide directing secretion. Over 31 to 576 (QTAPQVLRIG…VFSFLNPLSP (546 aa)) the chain is Extracellular. Residues Asn68, Asn74, Asn276, Asn379, Asn428, Asn439, and Asn446 are each glycosylated (N-linked (GlcNAc...) asparagine). Residues Pro531, Thr533, and Arg538 each contribute to the L-glutamate site. Asn561 carries N-linked (GlcNAc...) asparagine glycosylation. Residues 577–597 (DIWMYVLLACLGVSCVLFVIA) traverse the membrane as a helical segment. Over 598-653 (RFTPYEWYNPHPCNPDSDVVENNFTLLNSFWFGVGALMQQGSELMPKALSTRIVGG) the chain is Cytoplasmic. Residues 654-674 (IWWFFTLIIISSYTANLAAFL) traverse the membrane as a helical segment. The Extracellular segment spans residues 675 to 834 (TVERMESPID…KEASALGVEN (160 aa)). L-glutamate contacts are provided by Ser704 and Thr705. Ser725 carries the post-translational modification Phosphoserine; by PKC. Glu753 provides a ligand contact to L-glutamate. Thr761 bears the Phosphothreonine; by PKC mark. A disulfide bridge connects residues Cys765 and Cys819. Asn766 carries N-linked (GlcNAc...) asparagine glycosylation. The chain crosses the membrane as a helical span at residues 835-855 (IGGIFIVLAAGLVLSVFVAIG). At 856–918 (EFIYKSRKNN…IRKQSSVHTV (63 aa)) the chain is on the cytoplasmic side.

Belongs to the glutamate-gated ion channel (TC 1.A.10.1) family. GRIK1 subfamily. In terms of assembly, homotetramer or heterotetramer of pore-forming glutamate receptor subunits. Tetramers may be formed by the dimerization of dimers. Can form functional heteromeric receptors with GRIK4 and GRIK5. Interacts with KLHL17.

Its subcellular location is the cell membrane. The protein resides in the postsynaptic cell membrane. The catalysed reaction is Ca(2+)(in) = Ca(2+)(out). Ionotropic glutamate receptor that functions as a cation-permeable ligand-gated ion channel, gated by L-glutamate and the glutamatergic agonist kainic acid. L-glutamate acts as an excitatory neurotransmitter at many synapses in the central nervous system. Binding of the excitatory neurotransmitter L-glutamate induces a conformation change, leading to the opening of the cation channel, and thereby converts the chemical signal to an electrical impulse. The receptor then desensitizes rapidly and enters a transient inactive state, characterized by the presence of bound agonist. The sequence is that of Glutamate receptor ionotropic, kainate 1 (GRIK1) from Macaca fascicularis (Crab-eating macaque).